Reading from the N-terminus, the 272-residue chain is Universal stress protein MT2699 (272 aa).

Residues Gly-15, 109–115, and 123–124 contribute to the ATP site; these read GSVGIGR and ST.

This sequence belongs to the universal stress protein A family.

In Mycobacterium tuberculosis (strain CDC 1551 / Oshkosh), this protein is Universal stress protein MT2699.